The chain runs to 733 residues: Phosphoribosylformylglycinamidine synthase subunit PurL (733 aa).

Residue His32 is part of the active site. Tyr35 provides a ligand contact to ATP. Glu81 provides a ligand contact to Mg(2+). Residues 82-85 (SHNH) and Arg104 contribute to the substrate site. His83 acts as the Proton acceptor in catalysis. Asp105 is a Mg(2+) binding site. A substrate-binding site is contributed by Gln230. Asp258 is a binding site for Mg(2+). Residue 301–303 (ESQ) coordinates substrate. Residues Asp482 and Gly519 each contribute to the ATP site. Asn520 is a Mg(2+) binding site. Ser522 contributes to the substrate binding site.

The protein belongs to the FGAMS family. In terms of assembly, monomer. Part of the FGAM synthase complex composed of 1 PurL, 1 PurQ and 2 PurS subunits.

Its subcellular location is the cytoplasm. The catalysed reaction is N(2)-formyl-N(1)-(5-phospho-beta-D-ribosyl)glycinamide + L-glutamine + ATP + H2O = 2-formamido-N(1)-(5-O-phospho-beta-D-ribosyl)acetamidine + L-glutamate + ADP + phosphate + H(+). It functions in the pathway purine metabolism; IMP biosynthesis via de novo pathway; 5-amino-1-(5-phospho-D-ribosyl)imidazole from N(2)-formyl-N(1)-(5-phospho-D-ribosyl)glycinamide: step 1/2. Functionally, part of the phosphoribosylformylglycinamidine synthase complex involved in the purines biosynthetic pathway. Catalyzes the ATP-dependent conversion of formylglycinamide ribonucleotide (FGAR) and glutamine to yield formylglycinamidine ribonucleotide (FGAM) and glutamate. The FGAM synthase complex is composed of three subunits. PurQ produces an ammonia molecule by converting glutamine to glutamate. PurL transfers the ammonia molecule to FGAR to form FGAM in an ATP-dependent manner. PurS interacts with PurQ and PurL and is thought to assist in the transfer of the ammonia molecule from PurQ to PurL. This is Phosphoribosylformylglycinamidine synthase subunit PurL from Methanocaldococcus jannaschii (strain ATCC 43067 / DSM 2661 / JAL-1 / JCM 10045 / NBRC 100440) (Methanococcus jannaschii).